Reading from the N-terminus, the 257-residue chain is MIVAVDVGNTSTKIALCENGTVVDKWRISTCGKRTAAEYFSCISVLASRRSADILAGVRGAAISSVVPVVNRHVEELFERFFNISPVFITNSHADLFGLKICLAQPTIGADRVADLVAAKTVWPTSDLLVIDMGTATVFNLLDRNGGLYGQVVAPGVSCLVHSMRECTALLPQTLARESEKIVCDSTAASLEAGLYWGYRAMVEGITKQIMRESTRTLRVIATGGGVGLFRNCDYLNHIDELLTIKGIVQIYEKTQG.

6–13 (DVGNTSTK) is a binding site for ATP. 109–112 (GADR) lines the substrate pocket. Asp111 (proton acceptor) is an active-site residue. Asp132 serves as a coordination point for K(+). Thr135 contacts ATP. Thr187 contributes to the substrate binding site.

The protein belongs to the type III pantothenate kinase family. As to quaternary structure, homodimer. NH4(+) is required as a cofactor. K(+) serves as cofactor.

The protein resides in the cytoplasm. It catalyses the reaction (R)-pantothenate + ATP = (R)-4'-phosphopantothenate + ADP + H(+). It functions in the pathway cofactor biosynthesis; coenzyme A biosynthesis; CoA from (R)-pantothenate: step 1/5. Catalyzes the phosphorylation of pantothenate (Pan), the first step in CoA biosynthesis. This Anaplasma marginale (strain Florida) protein is Type III pantothenate kinase.